The sequence spans 365 residues: 2-aminoethylphosphonate--pyruvate transaminase (365 aa).

Lys194 is modified (N6-(pyridoxal phosphate)lysine).

Belongs to the class-V pyridoxal-phosphate-dependent aminotransferase family. PhnW subfamily. As to quaternary structure, homodimer. It depends on pyridoxal 5'-phosphate as a cofactor.

The enzyme catalyses (2-aminoethyl)phosphonate + pyruvate = phosphonoacetaldehyde + L-alanine. In terms of biological role, involved in phosphonate degradation. This is 2-aminoethylphosphonate--pyruvate transaminase from Bacillus cytotoxicus (strain DSM 22905 / CIP 110041 / 391-98 / NVH 391-98).